The chain runs to 465 residues: Cyclin-A1 (465 aa).

This sequence belongs to the cyclin family. Cyclin AB subfamily. In terms of assembly, interacts with the CDK2 and the CDC2 protein kinases to form a serine/threonine kinase holoenzyme complex. The cyclin subunit imparts substrate specificity to the complex. Does not bind CDK4 and CDK5 (in vitro). The cyclin A1-CDK2 complex interacts with transcription factor E2F-1 and RB proteins. Found in a complex with CDK2, CABLES1 and CCNE1. Interacts with INCA1. Interacts with KLHDC9. In terms of processing, polyubiquitinated via 'Lys-11'-linked ubiquitin by the anaphase-promoting complex (APC/C), leading to its degradation by the proteasome. Deubiquitinated and stabilized by USP37 enables entry into S phase. Ubiquitinated during the G1 phase by the SCF(FBXO31) complex, leading to its proteasomal degradation. Very high levels in testis and very low levels in brain. Also found in myeloid leukemia cell lines.

The protein localises to the nucleus. Its function is as follows. May be involved in the control of the cell cycle at the G1/S (start) and G2/M (mitosis) transitions. May primarily function in the control of the germline meiotic cell cycle and additionally in the control of mitotic cell cycle in some somatic cells. This Homo sapiens (Human) protein is Cyclin-A1 (CCNA1).